Here is a 985-residue protein sequence, read N- to C-terminus: MAGKKTITINGVEMEASEEQTVLQLLNNSSIEVPQVCYHPSLGPIETCDTCIVSINGELKRSCSAELKDGDVIDTLSPDVKKAQVIGMDKILYNHELYCTVCDYNNGGCEIHNTVKEMKINHQSIPFDHKPYHKDESHPFYRYDPDQCILCGRCVEACQDVQVTETLTIDWERKRPRVIWDNDVPINESSCVSCGHCSTVCPCNAMMEKGMEGEAGYLTGINNETLRPMIEITKGVETGYGSILAISDMESAMRDERIKKTKTVCTYCGVGCSFDVWTKGRDILKVEPQEEAPANGISTCVKGKFGWDFVNSEERLTKPLIREGDHFREAEWEEALLLIASKFTELKEAFGPDSLAFITSSKCTNEESYLMQKLARGVIGTNNVDNCSRYCQSPATAGLFRTVGYGGDSGSITDIAQADLVLIIGSNTSESHPVLSTRIKRAHKLRGQKVIVADIRKHEMAERSDLFVQPRAGSDIVWLNAIAKYLIENGKADERFLRERVNGRDEYVKSLAPYTLEYAEEKTGIDQETLIQMAEMIGQADSVCALWAMGVTQHIGGSDTSTAISNLLLVTGNYGKPGAGSYPLRGHNNVQGASDFGSMPDRLPGYEKVTDEQVRQKYERVWGVPLPKEPGMTNHEMIEKIHSGQLKAMYVKGEEMGLVDSNINHVHAAYEKLDFFVVQDIFLSRTAEFADVVLPASPSLEKEGTFTNTERRIQRLYQVFEPLGESKPDWQIIMEVANKLGAGWLYEHPADIMEEAAKLSPIYAGVTYERLEGYNSLQWPVNADGKDSPLLFTERFPFPDGKAILYPVQWTEPKEFGEEYDIHVNNGRLLEHFHEGNLTYKSKGISEKTPEVFLEISPELAAERGIQDGTLVRLTSPFGNVKVKCLITDRVKGKEVYLPMNDSGEAAINLLTGSHADKDTDTPAYKETSAKMEILKHDGISPLPKINHRNGNPQPQIGVQVHKKWARKDYIFPGDAVKRGMGHNG.

Residues 3-79 form the 2Fe-2S ferredoxin-type domain; it reads GKKTITINGV…GDVIDTLSPD (77 aa). Residues Cys37, Cys48, Cys51, and Cys63 each contribute to the [2Fe-2S] cluster site. One can recognise a 4Fe-4S His(Cys)3-ligated-type domain in the interval 79 to 119; the sequence is DVKKAQVIGMDKILYNHELYCTVCDYNNGGCEIHNTVKEMK. Positions 95, 99, 102, 109, 148, 151, 154, 158, 191, 194, 197, 201, 265, 268, 272, and 300 each coordinate [4Fe-4S] cluster. 2 consecutive 4Fe-4S ferredoxin-type domains span residues 139–170 and 182–211; these read PFYR…LTID and NDVP…EKGM. Residues 258–314 form the 4Fe-4S Mo/W bis-MGD-type domain; that stretch reads IKKTKTVCTYCGVGCSFDVWTKGRDILKVEPQEEAPANGISTCVKGKFGWDFVNSEE.

It in the C-terminal section; belongs to the prokaryotic molybdopterin-containing oxidoreductase family. Requires [2Fe-2S] cluster as cofactor. It depends on [4Fe-4S] cluster as a cofactor. Mo-bis(molybdopterin guanine dinucleotide) is required as a cofactor.

In Bacillus subtilis (strain 168), this protein is Probable oxidoreductase YjgC (yjgC).